Here is a 796-residue protein sequence, read N- to C-terminus: Choline transporter-like 2 (796 aa).

N-linked (GlcNAc...) asparagine glycosylation is present at asparagine 20. Residues 35–55 traverse the membrane as a helical segment; the sequence is PCLLLFVLFLGGWAFIAQYAI. Residues asparagine 209 and asparagine 284 are each glycosylated (N-linked (GlcNAc...) asparagine). The next 4 helical transmembrane spans lie at 304 to 324, 332 to 352, 386 to 406, and 431 to 451; these read WSIV…YIAL, ILWF…YFSV, LYLS…VIVL, and VFFP…AIGV. Asparagine 488 and asparagine 520 each carry an N-linked (GlcNAc...) asparagine glycan. The next 5 helical transmembrane spans lie at 542–562, 585–605, 626–648, 691–711, and 724–744; these read VFGF…VLAS, FFQT…ILAI, AVTR…FLKF, FLFF…TYYF, and IAVP…VFFG.

Belongs to the CTL (choline transporter-like) family.

Its subcellular location is the membrane. This Drosophila melanogaster (Fruit fly) protein is Choline transporter-like 2.